A 431-amino-acid polypeptide reads, in one-letter code: Glutamate-1-semialdehyde 2,1-aminomutase (431 aa).

An N6-(pyridoxal phosphate)lysine modification is found at Lys270.

The protein belongs to the class-III pyridoxal-phosphate-dependent aminotransferase family. HemL subfamily. As to quaternary structure, homodimer. Pyridoxal 5'-phosphate serves as cofactor.

The protein resides in the cytoplasm. The catalysed reaction is (S)-4-amino-5-oxopentanoate = 5-aminolevulinate. It participates in porphyrin-containing compound metabolism; protoporphyrin-IX biosynthesis; 5-aminolevulinate from L-glutamyl-tRNA(Glu): step 2/2. In Limosilactobacillus reuteri subsp. reuteri (strain JCM 1112) (Lactobacillus reuteri), this protein is Glutamate-1-semialdehyde 2,1-aminomutase.